Reading from the N-terminus, the 503-residue chain is Glycerol kinase (503 aa).

Residue Thr12 participates in ADP binding. Residues Thr12, Thr13, and Ser14 each coordinate ATP. Thr12 contributes to the sn-glycerol 3-phosphate binding site. Residue Arg16 participates in ADP binding. Sn-glycerol 3-phosphate contacts are provided by Arg82, Glu83, Tyr134, and Asp243. Residues Arg82, Glu83, Tyr134, Asp243, and Gln244 each coordinate glycerol. ADP-binding residues include Thr265 and Gly308. Positions 265, 308, 312, and 412 each coordinate ATP. Gly412 serves as a coordination point for ADP.

The protein belongs to the FGGY kinase family.

It catalyses the reaction glycerol + ATP = sn-glycerol 3-phosphate + ADP + H(+). The protein operates within polyol metabolism; glycerol degradation via glycerol kinase pathway; sn-glycerol 3-phosphate from glycerol: step 1/1. Inhibited by fructose 1,6-bisphosphate (FBP). Key enzyme in the regulation of glycerol uptake and metabolism. Catalyzes the phosphorylation of glycerol to yield sn-glycerol 3-phosphate. This is Glycerol kinase from Nitrobacter hamburgensis (strain DSM 10229 / NCIMB 13809 / X14).